Consider the following 288-residue polypeptide: Orotidine 5'-phosphate decarboxylase (288 aa).

Lys-97 acts as the Proton donor in catalysis.

The protein belongs to the OMP decarboxylase family. Type 2 subfamily.

The catalysed reaction is orotidine 5'-phosphate + H(+) = UMP + CO2. It participates in pyrimidine metabolism; UMP biosynthesis via de novo pathway; UMP from orotate: step 2/2. This chain is Orotidine 5'-phosphate decarboxylase, found in Clostridium tetani (strain Massachusetts / E88).